The sequence spans 140 residues: ATP synthase epsilon chain (140 aa).

Belongs to the ATPase epsilon chain family. As to quaternary structure, F-type ATPases have 2 components, CF(1) - the catalytic core - and CF(0) - the membrane proton channel. CF(1) has five subunits: alpha(3), beta(3), gamma(1), delta(1), epsilon(1). CF(0) has three main subunits: a, b and c.

Its subcellular location is the cell inner membrane. Produces ATP from ADP in the presence of a proton gradient across the membrane. In Yersinia enterocolitica serotype O:8 / biotype 1B (strain NCTC 13174 / 8081), this protein is ATP synthase epsilon chain.